A 22-amino-acid polypeptide reads, in one-letter code: Melittin-like peptide (22 aa).

Glutamine 22 bears the Glutamine amide mark.

Expressed by the skin dorsal glands.

It is found in the secreted. This is Melittin-like peptide from Rana temporaria (European common frog).